We begin with the raw amino-acid sequence, 185 residues long: Crossover junction endodeoxyribonuclease RuvC (185 aa).

Catalysis depends on residues Asp-7, Glu-68, and Asp-141. 3 residues coordinate Mg(2+): Asp-7, Glu-68, and Asp-141.

It belongs to the RuvC family. Homodimer which binds Holliday junction (HJ) DNA. The HJ becomes 2-fold symmetrical on binding to RuvC with unstacked arms; it has a different conformation from HJ DNA in complex with RuvA. In the full resolvosome a probable DNA-RuvA(4)-RuvB(12)-RuvC(2) complex forms which resolves the HJ. Requires Mg(2+) as cofactor.

Its subcellular location is the cytoplasm. It catalyses the reaction Endonucleolytic cleavage at a junction such as a reciprocal single-stranded crossover between two homologous DNA duplexes (Holliday junction).. Its function is as follows. The RuvA-RuvB-RuvC complex processes Holliday junction (HJ) DNA during genetic recombination and DNA repair. Endonuclease that resolves HJ intermediates. Cleaves cruciform DNA by making single-stranded nicks across the HJ at symmetrical positions within the homologous arms, yielding a 5'-phosphate and a 3'-hydroxyl group; requires a central core of homology in the junction. The consensus cleavage sequence is 5'-(A/T)TT(C/G)-3'. Cleavage occurs on the 3'-side of the TT dinucleotide at the point of strand exchange. HJ branch migration catalyzed by RuvA-RuvB allows RuvC to scan DNA until it finds its consensus sequence, where it cleaves and resolves the cruciform DNA. The polypeptide is Crossover junction endodeoxyribonuclease RuvC (Mycolicibacterium smegmatis (strain ATCC 700084 / mc(2)155) (Mycobacterium smegmatis)).